The following is a 196-amino-acid chain: GTP cyclohydrolase-2 (196 aa).

49–53 (RVHSE) lines the GTP pocket. Zn(2+)-binding residues include Cys-54, Cys-65, and Cys-67. GTP contacts are provided by residues Gln-70, 92–94 (EGR), and Thr-114. Asp-126 (proton acceptor) is an active-site residue. The active-site Nucleophile is Arg-128. GTP-binding residues include Thr-149 and Lys-154.

It belongs to the GTP cyclohydrolase II family. In terms of assembly, homodimer. Requires Zn(2+) as cofactor.

It carries out the reaction GTP + 4 H2O = 2,5-diamino-6-hydroxy-4-(5-phosphoribosylamino)-pyrimidine + formate + 2 phosphate + 3 H(+). It functions in the pathway cofactor biosynthesis; riboflavin biosynthesis; 5-amino-6-(D-ribitylamino)uracil from GTP: step 1/4. Its function is as follows. Catalyzes the conversion of GTP to 2,5-diamino-6-ribosylamino-4(3H)-pyrimidinone 5'-phosphate (DARP), formate and pyrophosphate. The sequence is that of GTP cyclohydrolase-2 from Escherichia coli O45:K1 (strain S88 / ExPEC).